Here is a 128-residue protein sequence, read N- to C-terminus: Sulfurtransferase TusD (128 aa).

Cysteine 78 (cysteine persulfide intermediate) is an active-site residue.

The protein belongs to the DsrE/TusD family. As to quaternary structure, heterohexamer, formed by a dimer of trimers. The hexameric TusBCD complex contains 2 copies each of TusB, TusC and TusD. The TusBCD complex interacts with TusE.

It localises to the cytoplasm. In terms of biological role, part of a sulfur-relay system required for 2-thiolation of 5-methylaminomethyl-2-thiouridine (mnm(5)s(2)U) at tRNA wobble positions. Accepts sulfur from TusA and transfers it in turn to TusE. This Klebsiella pneumoniae subsp. pneumoniae (strain ATCC 700721 / MGH 78578) protein is Sulfurtransferase TusD.